A 399-amino-acid polypeptide reads, in one-letter code: Carbamoyl phosphate synthase small chain (399 aa).

Positions 1–209 (MEKFKLLKLG…SAINKKLHTS (209 aa)) are CPSase. L-glutamine is bound by residues Ser-55, Gly-261, and Gly-263. In terms of domain architecture, Glutamine amidotransferase type-1 spans 213–399 (RIIVLDLGVK…VYIIYKSKSS (187 aa)). Cys-289 serves as the catalytic Nucleophile. L-glutamine is bound by residues Leu-290, Gln-293, Asn-329, Gly-331, and Phe-332. Active-site residues include His-372 and Glu-374.

The protein belongs to the CarA family. In terms of assembly, composed of two chains; the small (or glutamine) chain promotes the hydrolysis of glutamine to ammonia, which is used by the large (or ammonia) chain to synthesize carbamoyl phosphate. Tetramer of heterodimers (alpha,beta)4.

Its subcellular location is the plastid. It localises to the chloroplast. It carries out the reaction hydrogencarbonate + L-glutamine + 2 ATP + H2O = carbamoyl phosphate + L-glutamate + 2 ADP + phosphate + 2 H(+). The catalysed reaction is L-glutamine + H2O = L-glutamate + NH4(+). The protein operates within amino-acid biosynthesis; L-arginine biosynthesis; carbamoyl phosphate from bicarbonate: step 1/1. It functions in the pathway pyrimidine metabolism; UMP biosynthesis via de novo pathway; (S)-dihydroorotate from bicarbonate: step 1/3. Small subunit of the glutamine-dependent carbamoyl phosphate synthetase (CPSase). CPSase catalyzes the formation of carbamoyl phosphate from the ammonia moiety of glutamine, carbonate, and phosphate donated by ATP, constituting the first step of 2 biosynthetic pathways, one leading to arginine and/or urea and the other to pyrimidine nucleotides. The small subunit (glutamine amidotransferase) binds and cleaves glutamine to supply the large subunit with the substrate ammonia. The protein is Carbamoyl phosphate synthase small chain of Cyanidium caldarium (Red alga).